We begin with the raw amino-acid sequence, 217 residues long: tRNA (guanine-N(7)-)-methyltransferase (217 aa).

Residues Glu43, Asp68, Asn101, and Asn123 each contribute to the S-adenosyl-L-methionine site. Lys127 serves as a coordination point for substrate. The tract at residues 129 to 134 is interaction with RNA; it reads RHNKRR. Substrate-binding positions include Asp159 and 196–199; that span reads TEYE.

The protein belongs to the class I-like SAM-binding methyltransferase superfamily. TrmB family.

The enzyme catalyses guanosine(46) in tRNA + S-adenosyl-L-methionine = N(7)-methylguanosine(46) in tRNA + S-adenosyl-L-homocysteine. It participates in tRNA modification; N(7)-methylguanine-tRNA biosynthesis. Functionally, catalyzes the formation of N(7)-methylguanine at position 46 (m7G46) in tRNA. The sequence is that of tRNA (guanine-N(7)-)-methyltransferase from Clostridium botulinum (strain Langeland / NCTC 10281 / Type F).